The sequence spans 567 residues: 2-succinyl-5-enolpyruvyl-6-hydroxy-3-cyclohexene-1-carboxylate synthase (567 aa).

It belongs to the TPP enzyme family. MenD subfamily. In terms of assembly, homodimer. Mg(2+) is required as a cofactor. Requires Mn(2+) as cofactor. It depends on thiamine diphosphate as a cofactor.

It catalyses the reaction isochorismate + 2-oxoglutarate + H(+) = 5-enolpyruvoyl-6-hydroxy-2-succinyl-cyclohex-3-ene-1-carboxylate + CO2. The protein operates within quinol/quinone metabolism; 1,4-dihydroxy-2-naphthoate biosynthesis; 1,4-dihydroxy-2-naphthoate from chorismate: step 2/7. Its pathway is quinol/quinone metabolism; menaquinone biosynthesis. Its function is as follows. Catalyzes the thiamine diphosphate-dependent decarboxylation of 2-oxoglutarate and the subsequent addition of the resulting succinic semialdehyde-thiamine pyrophosphate anion to isochorismate to yield 2-succinyl-5-enolpyruvyl-6-hydroxy-3-cyclohexene-1-carboxylate (SEPHCHC). In Shewanella loihica (strain ATCC BAA-1088 / PV-4), this protein is 2-succinyl-5-enolpyruvyl-6-hydroxy-3-cyclohexene-1-carboxylate synthase.